The sequence spans 110 residues: Large ribosomal subunit protein uL22 (110 aa).

Belongs to the universal ribosomal protein uL22 family. As to quaternary structure, part of the 50S ribosomal subunit.

In terms of biological role, this protein binds specifically to 23S rRNA; its binding is stimulated by other ribosomal proteins, e.g. L4, L17, and L20. It is important during the early stages of 50S assembly. It makes multiple contacts with different domains of the 23S rRNA in the assembled 50S subunit and ribosome. The globular domain of the protein is located near the polypeptide exit tunnel on the outside of the subunit, while an extended beta-hairpin is found that lines the wall of the exit tunnel in the center of the 70S ribosome. This Mannheimia succiniciproducens (strain KCTC 0769BP / MBEL55E) protein is Large ribosomal subunit protein uL22.